A 432-amino-acid polypeptide reads, in one-letter code: UDP-N-acetylglucosamine 1-carboxyvinyltransferase (432 aa).

22–23 (KN) contacts phosphoenolpyruvate. Arg101 is a binding site for UDP-N-acetyl-alpha-D-glucosamine. Cys125 acts as the Proton donor in catalysis. Position 125 is a 2-(S-cysteinyl)pyruvic acid O-phosphothioketal (Cys125). Residues 130 to 134 (RPVDL), Asp315, and Ile337 each bind UDP-N-acetyl-alpha-D-glucosamine.

This sequence belongs to the EPSP synthase family. MurA subfamily.

The protein resides in the cytoplasm. It carries out the reaction phosphoenolpyruvate + UDP-N-acetyl-alpha-D-glucosamine = UDP-N-acetyl-3-O-(1-carboxyvinyl)-alpha-D-glucosamine + phosphate. The protein operates within cell wall biogenesis; peptidoglycan biosynthesis. Cell wall formation. Adds enolpyruvyl to UDP-N-acetylglucosamine. The polypeptide is UDP-N-acetylglucosamine 1-carboxyvinyltransferase (Paramagnetospirillum magneticum (strain ATCC 700264 / AMB-1) (Magnetospirillum magneticum)).